The primary structure comprises 207 residues: Thymidine kinase (207 aa).

ATP is bound by residues 15 to 22 (GSMFSGKS) and 88 to 91 (DEVQ). The active-site Proton acceptor is the Glu89. The Zn(2+) site is built by Cys145, Cys148, Cys183, and His186.

It belongs to the thymidine kinase family. As to quaternary structure, homotetramer.

The protein localises to the cytoplasm. It carries out the reaction thymidine + ATP = dTMP + ADP + H(+). The polypeptide is Thymidine kinase (Oceanobacillus iheyensis (strain DSM 14371 / CIP 107618 / JCM 11309 / KCTC 3954 / HTE831)).